An 88-amino-acid chain; its full sequence is Small ribosomal subunit protein uS17 (88 aa).

The protein belongs to the universal ribosomal protein uS17 family. Part of the 30S ribosomal subunit.

In terms of biological role, one of the primary rRNA binding proteins, it binds specifically to the 5'-end of 16S ribosomal RNA. In Prochlorococcus marinus (strain MIT 9312), this protein is Small ribosomal subunit protein uS17.